The following is a 343-amino-acid chain: Glutamine synthetase (343 aa).

Residues 3 to 87 form the GS beta-grasp domain; it reads FKAEYIWIDG…CEVLNIDLTP (85 aa). The 252-residue stretch at 92 to 343 folds into the GS catalytic domain; the sequence is TRAALAEVAE…CSALEKAGQV (252 aa). Mg(2+) contacts are provided by E113, E115, E174, and E181. E279 serves as a coordination point for L-glutamate.

Belongs to the glutamine synthetase family. Homooctamer and homotetramer. Requires Mg(2+) as cofactor.

The protein resides in the cytoplasm. It catalyses the reaction L-glutamate + NH4(+) + ATP = L-glutamine + ADP + phosphate + H(+). Functionally, catalyzes the ATP-dependent biosynthesis of glutamine from glutamate and ammonia. This is Glutamine synthetase from Streptomyces viridochromogenes.